The chain runs to 352 residues: Probable tyrosine-protein kinase DDB_G0290471 (352 aa).

One can recognise a Protein kinase domain in the interval 51 to 333; the sequence is IEYVCRLGSG…ISLNQIRSFY (283 aa). ATP is bound by residues 57-65 and Lys-78; that span reads LGSGSLCRV. The Proton acceptor role is filled by Asp-175.

This sequence belongs to the protein kinase superfamily. TKL Tyr protein kinase family.

It catalyses the reaction L-tyrosyl-[protein] + ATP = O-phospho-L-tyrosyl-[protein] + ADP + H(+). The chain is Probable tyrosine-protein kinase DDB_G0290471 from Dictyostelium discoideum (Social amoeba).